The primary structure comprises 247 residues: 5-hydroxytryptamine receptor 2A (247 aa).

Residue lysine 1 is a topological domain, extracellular. The chain crosses the membrane as a helical span at residues 2-26 (LCAIWIYLDVLFSTASIMHLCAISL). A disulfide bridge connects residues cysteine 3 and cysteine 82. Aspartate 10 is a serotonin binding site. A DRY motif; important for ligand-induced conformation changes motif is present at residues 27–29 (DRY). Topologically, residues 27–46 (DRYVAIQNPIHHSRFNSRTK) are cytoplasmic. Residues 47–70 (AFLKIIAVWTISVGISMPVPVFGL) form a helical membrane-spanning segment. At 71–87 (QDDSKVFKEGSCLLADD) the chain is on the extracellular side. A helical membrane pass occupies residues 88 to 113 (NFVLIGSFVAFFIPLTIMVITYFLTI). Over 114–177 (KSLQKEATLC…QSISNEQKAC (64 aa)) the chain is Cytoplasmic. Position 135 is a phosphoserine (serine 135). A helical transmembrane segment spans residues 178–203 (KVLGIVFFLFVVMWCPFFVTNIMAVI). Residue asparagine 198 coordinates serotonin. Residues cysteine 204 and cysteine 208 are joined by a disulfide bond. The Extracellular portion of the chain corresponds to 204 to 211 (CKESCNED). Residues 212–237 (VIGALLNVFVWIGYLSSAVNPLVYTL) traverse the membrane as a helical segment. Positions 231–235 (NPLVY) match the NPxxY motif; important for ligand-induced conformation changes and signaling motif. The Cytoplasmic portion of the chain corresponds to 238-247 (FNKTYRSAFA).

Belongs to the G-protein coupled receptor 1 family. In terms of assembly, interacts (via C-terminus) with MPDZ and PATJ. May interact (via C-terminus) with MPP3, PRDX6, DLG4, DLG1, CASK, APBA1 and MAGI2. Interacts with GRM2 and DRD2; this may affect signaling. As to expression, detected in adult intestine, especially in mucosal epithelium, longitudinal and circular layers of muscularis externa and myenteric plexuses. Highly expressed in Paneth cells, and detected at lower levels in enterocytes (at protein level).

Its subcellular location is the cell membrane. It localises to the cell projection. The protein resides in the dendrite. It is found in the axon. The protein localises to the cytoplasmic vesicle. Its subcellular location is the membrane. It localises to the caveola. The protein resides in the presynapse. Its activity is regulated as follows. G-protein coupled receptor activity is regulated by lipids: oleamide increases HTR2A-mediated activity. Its function is as follows. G-protein coupled receptor for 5-hydroxytryptamine (serotonin). Also functions as a receptor for various drugs and psychoactive substances, including mescaline, psilocybin, 1-(2,5-dimethoxy-4-iodophenyl)-2-aminopropane (DOI) and lysergic acid diethylamide (LSD). Ligand binding causes a conformation change that triggers signaling via guanine nucleotide-binding proteins (G proteins) and modulates the activity of downstream effectors. HTR2A is coupled to G(q)/G(11) G alpha proteins and activates phospholipase C-beta, releasing diacylglycerol (DAG) and inositol 1,4,5-trisphosphate (IP3) second messengers that modulate the activity of phosphatidylinositol 3-kinase and promote the release of Ca(2+) ions from intracellular stores, respectively. Beta-arrestin family members inhibit signaling via G proteins and mediate activation of alternative signaling pathways. Affects neural activity, perception, cognition and mood. Plays a role in the regulation of behavior, including responses to anxiogenic situations and psychoactive substances. Plays a role in intestinal smooth muscle contraction, and may play a role in arterial vasoconstriction. The protein is 5-hydroxytryptamine receptor 2A (HTR2A) of Cavia porcellus (Guinea pig).